The chain runs to 382 residues: Chaperone protein DnaJ (382 aa).

The 66-residue stretch at 5–70 (DYYDLLGLSK…DKRAAYDRYG (66 aa)) folds into the J domain. The CR-type zinc-finger motif lies at 138–216 (GTKVPINYVT…CSGSGRVRDE (79 aa)). Positions 151, 154, 168, 171, 190, 193, 204, and 207 each coordinate Zn(2+). CXXCXGXG motif repeat units lie at residues 151–158 (CSSCSGSG), 168–175 (CNTCHGAG), 190–197 (CHVCNGEG), and 204–211 (CKKCSGSG).

This sequence belongs to the DnaJ family. As to quaternary structure, homodimer. Requires Zn(2+) as cofactor.

Its subcellular location is the cytoplasm. Its function is as follows. Participates actively in the response to hyperosmotic and heat shock by preventing the aggregation of stress-denatured proteins and by disaggregating proteins, also in an autonomous, DnaK-independent fashion. Unfolded proteins bind initially to DnaJ; upon interaction with the DnaJ-bound protein, DnaK hydrolyzes its bound ATP, resulting in the formation of a stable complex. GrpE releases ADP from DnaK; ATP binding to DnaK triggers the release of the substrate protein, thus completing the reaction cycle. Several rounds of ATP-dependent interactions between DnaJ, DnaK and GrpE are required for fully efficient folding. Also involved, together with DnaK and GrpE, in the DNA replication of plasmids through activation of initiation proteins. The chain is Chaperone protein DnaJ from Ehrlichia ruminantium (strain Gardel).